The chain runs to 388 residues: Succinate--CoA ligase [ADP-forming] subunit beta (388 aa).

Residues 9–244 (KQLFAEYGLP…PSQEDEREAH (236 aa)) enclose the ATP-grasp domain. ATP contacts are provided by residues lysine 46, 53–55 (GRG), glutamate 99, serine 102, and glutamate 107. Residues asparagine 199 and aspartate 213 each contribute to the Mg(2+) site. Residues asparagine 264 and 321 to 323 (GIV) contribute to the substrate site.

This sequence belongs to the succinate/malate CoA ligase beta subunit family. In terms of assembly, heterotetramer of two alpha and two beta subunits. Requires Mg(2+) as cofactor.

The enzyme catalyses succinate + ATP + CoA = succinyl-CoA + ADP + phosphate. It carries out the reaction GTP + succinate + CoA = succinyl-CoA + GDP + phosphate. Its pathway is carbohydrate metabolism; tricarboxylic acid cycle; succinate from succinyl-CoA (ligase route): step 1/1. Its function is as follows. Succinyl-CoA synthetase functions in the citric acid cycle (TCA), coupling the hydrolysis of succinyl-CoA to the synthesis of either ATP or GTP and thus represents the only step of substrate-level phosphorylation in the TCA. The beta subunit provides nucleotide specificity of the enzyme and binds the substrate succinate, while the binding sites for coenzyme A and phosphate are found in the alpha subunit. The chain is Succinate--CoA ligase [ADP-forming] subunit beta from Aliivibrio salmonicida (strain LFI1238) (Vibrio salmonicida (strain LFI1238)).